An 89-amino-acid polypeptide reads, in one-letter code: Small ribosomal subunit protein bS16 (89 aa).

The protein belongs to the bacterial ribosomal protein bS16 family.

In Nitrosomonas europaea (strain ATCC 19718 / CIP 103999 / KCTC 2705 / NBRC 14298), this protein is Small ribosomal subunit protein bS16.